Consider the following 186-residue polypeptide: Potassium-transporting ATPase KdpC subunit (186 aa).

The helical transmembrane segment at Leu-10–Gly-30 threads the bilayer.

This sequence belongs to the KdpC family. The system is composed of three essential subunits: KdpA, KdpB and KdpC.

It is found in the cell membrane. In terms of biological role, part of the high-affinity ATP-driven potassium transport (or Kdp) system, which catalyzes the hydrolysis of ATP coupled with the electrogenic transport of potassium into the cytoplasm. This subunit acts as a catalytic chaperone that increases the ATP-binding affinity of the ATP-hydrolyzing subunit KdpB by the formation of a transient KdpB/KdpC/ATP ternary complex. The chain is Potassium-transporting ATPase KdpC subunit from Staphylococcus aureus (strain MSSA476).